A 664-amino-acid chain; its full sequence is DNA mismatch repair protein MutL (664 aa).

The tract at residues 382 to 447 (RKAGQEQQLQ…YGEPAPSKQQ (66 aa)) is disordered. Residues 427–436 (RHTTSSNQSE) are compositionally biased toward polar residues.

The protein belongs to the DNA mismatch repair MutL/HexB family.

This protein is involved in the repair of mismatches in DNA. It is required for dam-dependent methyl-directed DNA mismatch repair. May act as a 'molecular matchmaker', a protein that promotes the formation of a stable complex between two or more DNA-binding proteins in an ATP-dependent manner without itself being part of a final effector complex. The protein is DNA mismatch repair protein MutL of Vibrio vulnificus (strain YJ016).